The chain runs to 180 residues: WPP domain-containing protein 2 (180 aa).

Positions 1 to 26 (MAETAETINTTISSPPPESESSTTIS) are enriched in low complexity. Disordered stretches follow at residues 1-61 (MAET…LRIW) and 140-180 (SVKA…KSEA). Polar residues predominate over residues 27–36 (AMTDPTSQEA). A compositionally biased stretch (basic and acidic residues) spans 37-53 (ASKDTDLTKEAESEKKP). The tract at residues 44–147 (TKEAESEKKP…LESVKARSNA (104 aa)) is WPP. Residue serine 173 is modified to Phosphoserine.

Binds to FPP proteins. Interacts with WAP, WIP1, WIP2 and WIP3 through its WPP domain. Interacts with WIT1 and HSP70-1. Expressed in roots, stems, leaves and flowers.

It is found in the nucleus envelope. The protein resides in the cytoplasm. Its subcellular location is the nucleus. The protein localises to the golgi apparatus. Its function is as follows. Regulates the mitotic activity in roots. Plays a role with HSP70-1 in facilitating WIT1 nuclear envelope targeting. This Arabidopsis thaliana (Mouse-ear cress) protein is WPP domain-containing protein 2 (WPP2).